A 231-amino-acid polypeptide reads, in one-letter code: Flagellar L-ring protein (231 aa).

A signal peptide spans 1–18; that stretch reads MNRLLSLFALGGAVLLAG. A lipid anchor (N-palmitoyl cysteine) is attached at Cys19. Residue Cys19 is the site of S-diacylglycerol cysteine attachment.

The protein belongs to the FlgH family. In terms of assembly, the basal body constitutes a major portion of the flagellar organelle and consists of four rings (L,P,S, and M) mounted on a central rod.

The protein localises to the cell outer membrane. The protein resides in the bacterial flagellum basal body. In terms of biological role, assembles around the rod to form the L-ring and probably protects the motor/basal body from shearing forces during rotation. The sequence is that of Flagellar L-ring protein from Pseudomonas putida (strain W619).